The primary structure comprises 294 residues: ATP synthase gamma chain (294 aa).

This sequence belongs to the ATPase gamma chain family. As to quaternary structure, F-type ATPases have 2 components, CF(1) - the catalytic core - and CF(0) - the membrane proton channel. CF(1) has five subunits: alpha(3), beta(3), gamma(1), delta(1), epsilon(1). CF(0) has three main subunits: a, b and c.

The protein resides in the cell membrane. Functionally, produces ATP from ADP in the presence of a proton gradient across the membrane. The gamma chain is believed to be important in regulating ATPase activity and the flow of protons through the CF(0) complex. This chain is ATP synthase gamma chain, found in Ruminiclostridium cellulolyticum (strain ATCC 35319 / DSM 5812 / JCM 6584 / H10) (Clostridium cellulolyticum).